A 391-amino-acid chain; its full sequence is Processive diacylglycerol beta-glucosyltransferase (391 aa).

Belongs to the glycosyltransferase 28 family. UgtP subfamily.

It is found in the cell membrane. The catalysed reaction is a 1,2-diacyl-3-O-(beta-D-glucopyranosyl)-sn-glycerol + UDP-alpha-D-glucose = a 1,2-diacyl-3-O-(beta-D-Glc-(1-&gt;6)-beta-D-Glc)-sn-glycerol + UDP + H(+). It catalyses the reaction a 1,2-diacyl-sn-glycerol + UDP-alpha-D-glucose = a 1,2-diacyl-3-O-(beta-D-glucopyranosyl)-sn-glycerol + UDP + H(+). Its pathway is glycolipid metabolism; diglucosyl-diacylglycerol biosynthesis. Processive glucosyltransferase involved in the biosynthesis of both the bilayer- and non-bilayer-forming membrane glucolipids. Is able to successively transfer two glucosyl residues to diacylglycerol (DAG), thereby catalyzing the formation of beta-monoglucosyl-DAG (3-O-(beta-D-glucopyranosyl)-1,2-diacyl-sn-glycerol) and beta-diglucosyl-DAG (3-O-(beta-D-glucopyranosyl-beta-(1-&gt;6)-D-glucopyranosyl)-1,2-diacyl-sn-glycerol). Beta-diglucosyl-DAG is the predominant glycolipid found in Bacillales and is also used as a membrane anchor for lipoteichoic acid (LTA). This is Processive diacylglycerol beta-glucosyltransferase from Staphylococcus aureus (strain MRSA252).